Here is a 63-residue protein sequence, read N- to C-terminus: Conotoxin Tx-D0111 (63 aa).

Positions 1 to 19 (MRCLPVFVILLLLIASTPS) are cleaved as a signal peptide. The propeptide occupies 20-47 (DTVPLKTKDDMPQASFHGNARRTLQMLS).

It belongs to the conotoxin T superfamily. Contains 2 disulfide bonds that can be either 'C1-C3, C2-C4' or 'C1-C4, C2-C3', since these disulfide connectivities have been observed for conotoxins with cysteine framework V (for examples, see AC P0DQQ7 and AC P81755). As to expression, expressed by the venom duct.

Its subcellular location is the secreted. The polypeptide is Conotoxin Tx-D0111 (Conus textile (Cloth-of-gold cone)).